The sequence spans 163 residues: Large ribosomal subunit protein bL21 (163 aa).

The segment at 124–163 (KETTKKTKATVSIKKTAKKPSEKKSAPQKKAAVVSNNKED) is disordered.

Belongs to the bacterial ribosomal protein bL21 family. Part of the 50S ribosomal subunit. Contacts protein L20.

Functionally, this protein binds to 23S rRNA in the presence of protein L20. The polypeptide is Large ribosomal subunit protein bL21 (Bartonella quintana (strain Toulouse) (Rochalimaea quintana)).